Consider the following 405-residue polypeptide: S-arrestin (405 aa).

Thr-234 carries the phosphothreonine modification.

Belongs to the arrestin family. As to quaternary structure, monomer. Homodimer. Homotetramer. Interacts with RHO (via the phosphorylated C-terminus).

It localises to the cell projection. It is found in the cilium. Its subcellular location is the photoreceptor outer segment. The protein localises to the membrane. Functionally, binds to photoactivated, phosphorylated RHO and terminates RHO signaling via G-proteins by competing with G-proteins for the same binding site on RHO. May play a role in preventing light-dependent degeneration of retinal photoreceptor cells. In Canis lupus familiaris (Dog), this protein is S-arrestin (SAG).